A 516-amino-acid chain; its full sequence is Beta-glucosidase 1 (516 aa).

Positions 1–21 (MGHRLVVVLLLALLVAGAARA) are cleaved as a signal peptide. Gln68 contacts a beta-D-glucoside. The N-linked (GlcNAc...) asparagine glycan is linked to Asn96. A beta-D-glucoside-binding positions include His169 and 214 to 215 (NE). The active-site Proton donor is Glu215. A disulfide bridge links Cys234 with Cys237. N-linked (GlcNAc...) asparagine glycosylation is present at Asn290. An a beta-D-glucoside-binding site is contributed by Tyr353. The N-linked (GlcNAc...) asparagine glycan is linked to Asn364. Glu424 is an a beta-D-glucoside binding site. Glu424 (nucleophile) is an active-site residue. Residue Asn432 is glycosylated (N-linked (GlcNAc...) asparagine). A beta-D-glucoside is bound by residues Trp471, 478 to 479 (EW), and Phe487.

This sequence belongs to the glycosyl hydrolase 1 family.

The enzyme catalyses Hydrolysis of terminal, non-reducing beta-D-glucosyl residues with release of beta-D-glucose.. In Oryza sativa subsp. japonica (Rice), this protein is Beta-glucosidase 1 (BGLU1).